A 1165-amino-acid chain; its full sequence is ATP-dependent helicase/deoxyribonuclease subunit B (1165 aa).

Positions M1 to R298 constitute a UvrD-like helicase ATP-binding domain. Position 8-15 (G8–T15) interacts with ATP. One can recognise a UvrD-like helicase C-terminal domain in the interval P279–D584. Positions 800, 1119, 1122, and 1128 each coordinate [4Fe-4S] cluster.

This sequence belongs to the helicase family. AddB/RexB type 1 subfamily. As to quaternary structure, heterodimer of AddA and AddB. Mg(2+) serves as cofactor. It depends on [4Fe-4S] cluster as a cofactor.

Functionally, the heterodimer acts as both an ATP-dependent DNA helicase and an ATP-dependent, dual-direction single-stranded exonuclease. Recognizes the chi site generating a DNA molecule suitable for the initiation of homologous recombination. The AddB subunit has 5' -&gt; 3' nuclease activity but not helicase activity. This chain is ATP-dependent helicase/deoxyribonuclease subunit B, found in Desulforudis audaxviator (strain MP104C).